The chain runs to 153 residues: Putative riboflavin kinase (153 aa).

The Mg(2+) site is built by Thr-28 and Asn-30. The active-site Nucleophile is Glu-80.

As to quaternary structure, monomer. Zn(2+) serves as cofactor. The cofactor is Mg(2+).

The protein localises to the cytoplasm. The catalysed reaction is riboflavin + ATP = FMN + ADP + H(+). The protein operates within cofactor biosynthesis; FMN biosynthesis; FMN from riboflavin (ATP route): step 1/1. Functionally, catalyzes the phosphorylation of riboflavin (vitamin B2) to form flavin-mononucleotide (FMN). This chain is Putative riboflavin kinase, found in Drosophila melanogaster (Fruit fly).